A 270-amino-acid chain; its full sequence is 4-hydroxy-tetrahydrodipicolinate reductase (270 aa).

NAD(+)-binding positions include 11–16 and glutamate 37; that span reads GAGGRM. Arginine 38 contacts NADP(+). NAD(+) is bound by residues 101-103 and 125-128; these read GTT and APNM. Histidine 158 functions as the Proton donor/acceptor in the catalytic mechanism. Histidine 159 contributes to the (S)-2,3,4,5-tetrahydrodipicolinate binding site. Catalysis depends on lysine 162, which acts as the Proton donor. Position 168-169 (168-169) interacts with (S)-2,3,4,5-tetrahydrodipicolinate; the sequence is GT.

It belongs to the DapB family.

It is found in the cytoplasm. It catalyses the reaction (S)-2,3,4,5-tetrahydrodipicolinate + NAD(+) + H2O = (2S,4S)-4-hydroxy-2,3,4,5-tetrahydrodipicolinate + NADH + H(+). It carries out the reaction (S)-2,3,4,5-tetrahydrodipicolinate + NADP(+) + H2O = (2S,4S)-4-hydroxy-2,3,4,5-tetrahydrodipicolinate + NADPH + H(+). It participates in amino-acid biosynthesis; L-lysine biosynthesis via DAP pathway; (S)-tetrahydrodipicolinate from L-aspartate: step 4/4. Functionally, catalyzes the conversion of 4-hydroxy-tetrahydrodipicolinate (HTPA) to tetrahydrodipicolinate. The protein is 4-hydroxy-tetrahydrodipicolinate reductase of Shewanella putrefaciens (strain CN-32 / ATCC BAA-453).